The primary structure comprises 428 residues: Trigger factor (428 aa).

A PPIase FKBP-type domain is found at 163-248; sequence GDMVVIDYKG…VHEIKEKELP (86 aa).

The protein belongs to the FKBP-type PPIase family. Tig subfamily.

It is found in the cytoplasm. The enzyme catalyses [protein]-peptidylproline (omega=180) = [protein]-peptidylproline (omega=0). Involved in protein export. Acts as a chaperone by maintaining the newly synthesized protein in an open conformation. Functions as a peptidyl-prolyl cis-trans isomerase. This Alkaliphilus metalliredigens (strain QYMF) protein is Trigger factor.